The sequence spans 164 residues: UPF0114 protein Sbal_0780 (164 aa).

4 helical membrane-spanning segments follow: residues 15–35 (IMAPIYLGLSLILFALGVKFF), 53–73 (LVLLTLSLIDITLVGGLIVMV), 109–129 (VAASIVAISSIHLLKVFMNAE), and 136–156 (IMWYLLIHITFVLSAFAMGYL).

This sequence belongs to the UPF0114 family.

The protein localises to the cell membrane. This Shewanella baltica (strain OS155 / ATCC BAA-1091) protein is UPF0114 protein Sbal_0780.